The chain runs to 129 residues: Fluoride-specific ion channel FluC (129 aa).

Transmembrane regions (helical) follow at residues 4–24 (VLIV…LGEW), 30–50 (GFPT…GWLL), 63–83 (WSLL…TFSV), and 95–115 (IVAS…AYIG). Positions 73 and 76 each coordinate Na(+).

It belongs to the fluoride channel Fluc/FEX (TC 1.A.43) family.

It localises to the cell membrane. The catalysed reaction is fluoride(in) = fluoride(out). With respect to regulation, na(+) is not transported, but it plays an essential structural role and its presence is essential for fluoride channel function. Its function is as follows. Fluoride-specific ion channel. Important for reducing fluoride concentration in the cell, thus reducing its toxicity. This chain is Fluoride-specific ion channel FluC, found in Oceanobacillus iheyensis (strain DSM 14371 / CIP 107618 / JCM 11309 / KCTC 3954 / HTE831).